Consider the following 433-residue polypeptide: Serine/threonine-protein phosphatase 2A activator 2 (433 aa).

Positions 1–10 are enriched in pro residues; the sequence is MTSQAPPQPA. 2 disordered regions span residues 1 to 67 and 367 to 400; these read MTSQ…NWTF and SMSEDTGAGDEADVEDDPHAGHDHTGKAHDGTGW. Residues 11–23 are compositionally biased toward low complexity; that stretch reads SSPGVAAPAAASS. Positions 45 to 59 are enriched in pro residues; the sequence is NPTPIPETPALPTPP. Residues 367–382 show a composition bias toward acidic residues; that stretch reads SMSEDTGAGDEADVED. Residues 383–396 show a composition bias toward basic and acidic residues; it reads DPHAGHDHTGKAHD.

It belongs to the PTPA-type PPIase family.

It is found in the cytoplasm. The enzyme catalyses [protein]-peptidylproline (omega=180) = [protein]-peptidylproline (omega=0). PPIases accelerate the folding of proteins. It catalyzes the cis-trans isomerization of proline imidic peptide bonds in oligopeptides. Acts as a regulatory subunit for PP2A-like phosphatases modulating their activity or substrate specificity, probably by inducing a conformational change in the catalytic subunit, a direct target of the PPIase. Can reactivate inactive phosphatase PP2A-phosphatase methylesterase complexes (PP2Ai) in presence of ATP and Mg(2+) by dissociating the inactive form from the complex. This Gibberella zeae (strain ATCC MYA-4620 / CBS 123657 / FGSC 9075 / NRRL 31084 / PH-1) (Wheat head blight fungus) protein is Serine/threonine-protein phosphatase 2A activator 2 (RRD2).